We begin with the raw amino-acid sequence, 293 residues long: Digeranylgeranylglyceryl phosphate synthase (293 aa).

7 helical membrane passes run 26–46, 50–70, 107–127, 140–160, 215–235, 237–257, and 273–293; these read LMYG…FSDL, LLGY…NDYF, FVAA…VSVL, FAGN…GSII, IASL…FLLP, FLFD…LIYV, and YRKV…AGAF.

The protein belongs to the UbiA prenyltransferase family. DGGGP synthase subfamily. The cofactor is Mg(2+).

Its subcellular location is the cell membrane. It catalyses the reaction sn-3-O-(geranylgeranyl)glycerol 1-phosphate + (2E,6E,10E)-geranylgeranyl diphosphate = 2,3-bis-O-(geranylgeranyl)-sn-glycerol 1-phosphate + diphosphate. It participates in membrane lipid metabolism; glycerophospholipid metabolism. Its function is as follows. Prenyltransferase that catalyzes the transfer of the geranylgeranyl moiety of geranylgeranyl diphosphate (GGPP) to the C2 hydroxyl of (S)-3-O-geranylgeranylglyceryl phosphate (GGGP). This reaction is the second ether-bond-formation step in the biosynthesis of archaeal membrane lipids. This chain is Digeranylgeranylglyceryl phosphate synthase, found in Archaeoglobus fulgidus (strain ATCC 49558 / DSM 4304 / JCM 9628 / NBRC 100126 / VC-16).